A 489-amino-acid polypeptide reads, in one-letter code: Bypass of stop codon protein 5 (489 aa).

Positions Met1–Glu42 are disordered. Positions Ser18 to Phe30 are enriched in low complexity. Phosphoserine is present on residues Ser111 and Ser350.

Belongs to the BUL1 family.

Functionally, appears to play a role in translation fidelity, and may act when translation is compromised. May be a component of the ubiquitination pathway. In Saccharomyces cerevisiae (strain ATCC 204508 / S288c) (Baker's yeast), this protein is Bypass of stop codon protein 5 (BSC5).